A 557-amino-acid polypeptide reads, in one-letter code: Membrane protein insertase YidC (557 aa).

The helical transmembrane segment at 3–23 threads the bilayer; that stretch reads NLRPVLYLSMLLVLFLIWQAW. Residues 34–60 are disordered; sequence APGAQEQVMDRDGVPAPPQDVPDAPVS. A run of 4 helical transmembrane segments spans residues 366-386, 436-456, 480-500, and 514-534; these read VVGN…LVFY, LGGC…YWVL, YFIL…LNPA, and PFVF…YWFV.

The protein belongs to the OXA1/ALB3/YidC family. Type 1 subfamily. In terms of assembly, interacts with the Sec translocase complex via SecD. Specifically interacts with transmembrane segments of nascent integral membrane proteins during membrane integration.

It is found in the cell inner membrane. In terms of biological role, required for the insertion and/or proper folding and/or complex formation of integral membrane proteins into the membrane. Involved in integration of membrane proteins that insert both dependently and independently of the Sec translocase complex, as well as at least some lipoproteins. Aids folding of multispanning membrane proteins. The protein is Membrane protein insertase YidC of Thioalkalivibrio sulfidiphilus (strain HL-EbGR7).